The primary structure comprises 454 residues: MSLEIVILAAGQGTRMRSALPKVLHPIAGKPMLGHVIDCARQLQPERIHVVIGHGADLVRERMAADDLNFVLQAEQLGTGHAVAQALPFLSADQVLILYGDVPLIQLDTLQRLLAQVTPDQLSLLTVDMLDPTGYGRIVRDDQGAVQAIVEHKDATPAQRQIGEINTGILAVPGKRLADWLGRLSNDNAQGEYYLTDVIAMAVGDGLVVASAQPLDAMEVQGVNDRMQQAQLERHYQRLRAEELMRQGVTLLDPQRLDVRGEISVGRDVLIDVNVVLEGRVVIEDDVRIGPNCVIRDSVLRRGAVIKANSHLEGAELGEGSDAGPFARLRPGSVLGARAHVGNFVELKNARLGEGSKAGHLSYLGDAELGANCNIGAGTITCNYDGANKFRTELGDDVFIGSNNSLVAPLKIGDGATTAAGSTITHEVPAKNLAFGRARQKNLENWKRPEKIKK.

The interval 1–226 (MSLEIVILAA…AMEVQGVNDR (226 aa)) is pyrophosphorylase. UDP-N-acetyl-alpha-D-glucosamine contacts are provided by residues 8-11 (LAAG), K22, Q73, 78-79 (GT), 99-101 (YGD), G136, E151, N166, and N224. D101 contacts Mg(2+). N224 is a binding site for Mg(2+). The segment at 227-247 (MQQAQLERHYQRLRAEELMRQ) is linker. The tract at residues 248–454 (GVTLLDPQRL…NWKRPEKIKK (207 aa)) is N-acetyltransferase. 2 residues coordinate UDP-N-acetyl-alpha-D-glucosamine: R330 and K348. H360 (proton acceptor) is an active-site residue. The UDP-N-acetyl-alpha-D-glucosamine site is built by Y363 and N374. Acetyl-CoA contacts are provided by residues A377, 383-384 (NY), S402, A420, and R437.

It in the N-terminal section; belongs to the N-acetylglucosamine-1-phosphate uridyltransferase family. The protein in the C-terminal section; belongs to the transferase hexapeptide repeat family. Homotrimer. Mg(2+) serves as cofactor.

The protein localises to the cytoplasm. The enzyme catalyses alpha-D-glucosamine 1-phosphate + acetyl-CoA = N-acetyl-alpha-D-glucosamine 1-phosphate + CoA + H(+). The catalysed reaction is N-acetyl-alpha-D-glucosamine 1-phosphate + UTP + H(+) = UDP-N-acetyl-alpha-D-glucosamine + diphosphate. Its pathway is nucleotide-sugar biosynthesis; UDP-N-acetyl-alpha-D-glucosamine biosynthesis; N-acetyl-alpha-D-glucosamine 1-phosphate from alpha-D-glucosamine 6-phosphate (route II): step 2/2. It functions in the pathway nucleotide-sugar biosynthesis; UDP-N-acetyl-alpha-D-glucosamine biosynthesis; UDP-N-acetyl-alpha-D-glucosamine from N-acetyl-alpha-D-glucosamine 1-phosphate: step 1/1. It participates in bacterial outer membrane biogenesis; LPS lipid A biosynthesis. Functionally, catalyzes the last two sequential reactions in the de novo biosynthetic pathway for UDP-N-acetylglucosamine (UDP-GlcNAc). The C-terminal domain catalyzes the transfer of acetyl group from acetyl coenzyme A to glucosamine-1-phosphate (GlcN-1-P) to produce N-acetylglucosamine-1-phosphate (GlcNAc-1-P), which is converted into UDP-GlcNAc by the transfer of uridine 5-monophosphate (from uridine 5-triphosphate), a reaction catalyzed by the N-terminal domain. The chain is Bifunctional protein GlmU from Pseudomonas aeruginosa (strain ATCC 15692 / DSM 22644 / CIP 104116 / JCM 14847 / LMG 12228 / 1C / PRS 101 / PAO1).